The sequence spans 780 residues: Heat shock protein 90-5, chloroplastic (780 aa).

The transit peptide at 1–60 directs the protein to the chloroplast; the sequence is MAPALSRSLYTSPLTSVPITPVSSRLSHLRSSFLPHGGALRTGVSCSWNLEKRCNRFAVK. ATP is bound by residues glutamate 106, asparagine 110, aspartate 152, methionine 157, 172 to 173, 196 to 201, threonine 251, and arginine 441; these read SG and QFGVGF. A disordered region spans residues 742 to 780; it reads GRVEEEEESSTVNEGDDKSGETEVVEPSEVRAESDPWQD. Basic and acidic residues predominate over residues 769-780; it reads SEVRAESDPWQD.

Belongs to the heat shock protein 90 family. As to quaternary structure, homodimer. Interacts with VIPP1. Interacts with P23-1. As to expression, expressed in roots, cotyledons, young leaves, mature leaves, stems, flowers, petals and siliques.

Its subcellular location is the plastid. It localises to the chloroplast stroma. Molecular chaperone required for chloroplast biogenesis. Essential for chloroplast biogenesis and maintenance, and thus for embryogenesis. May be involved in the disassembly of VIPP1 for thylakoid membrane formation and/or maintenance. Cooperates with TIC components and other molecular chaperones to drive transport of preproteins into chloroplasts and functions in the chloroplast stroma to facilitate membrane translocation during protein import into the organelle. This is Heat shock protein 90-5, chloroplastic from Arabidopsis thaliana (Mouse-ear cress).